Here is a 237-residue protein sequence, read N- to C-terminus: MSKYKRILLKLSGEALASTTNIIDPVTLNKIVDIIKSVLSQNIEIAIVIGGGNIFRGETLTKTGINRITSDHIGMLSTIINALAIADTCQKNKVDALVMSGLSIGGGICNSINHIYAKQALKKGKVIIFCAGTGNPCFTTDTGAALRAIEIGADAIFKATKVDGIYTDDPVKNPNAKRYNSLSFDEAIEKNLQIMDVSAFALCRKHDLEICVFSMLENTNTLSDLLKGKLLGTIVRK.

10–13 (KLSG) is an ATP binding site. G51 serves as a coordination point for UMP. Residues G52 and R56 each contribute to the ATP site. UMP-binding positions include D71 and 133–140 (TGNPCFTT). The ATP site is built by T160, Y166, and D169.

This sequence belongs to the UMP kinase family. As to quaternary structure, homohexamer.

It is found in the cytoplasm. The enzyme catalyses UMP + ATP = UDP + ADP. It functions in the pathway pyrimidine metabolism; CTP biosynthesis via de novo pathway; UDP from UMP (UMPK route): step 1/1. Its activity is regulated as follows. Inhibited by UTP. Catalyzes the reversible phosphorylation of UMP to UDP. This is Uridylate kinase from Vesicomyosocius okutanii subsp. Calyptogena okutanii (strain HA).